Reading from the N-terminus, the 330-residue chain is Methionyl-tRNA formyltransferase (330 aa).

Residue 121–124 participates in (6S)-5,6,7,8-tetrahydrofolate binding; it reads SLLP.

It belongs to the Fmt family.

It carries out the reaction L-methionyl-tRNA(fMet) + (6R)-10-formyltetrahydrofolate = N-formyl-L-methionyl-tRNA(fMet) + (6S)-5,6,7,8-tetrahydrofolate + H(+). Attaches a formyl group to the free amino group of methionyl-tRNA(fMet). The formyl group appears to play a dual role in the initiator identity of N-formylmethionyl-tRNA by promoting its recognition by IF2 and preventing the misappropriation of this tRNA by the elongation apparatus. In Burkholderia cenocepacia (strain ATCC BAA-245 / DSM 16553 / LMG 16656 / NCTC 13227 / J2315 / CF5610) (Burkholderia cepacia (strain J2315)), this protein is Methionyl-tRNA formyltransferase.